Here is a 102-residue protein sequence, read N- to C-terminus: Small ribosomal subunit protein uS10 (102 aa).

This sequence belongs to the universal ribosomal protein uS10 family. Part of the 30S ribosomal subunit.

In terms of biological role, involved in the binding of tRNA to the ribosomes. The protein is Small ribosomal subunit protein uS10 of Bifidobacterium animalis subsp. lactis (strain AD011).